The primary structure comprises 188 residues: uncharacterized protein (188 aa).

The helical transmembrane segment at Ile121 to Val139 threads the bilayer.

The protein to B.subtilis YwjB.

The protein localises to the membrane. This is an uncharacterized protein from Bacillus subtilis (strain 168).